Here is a 232-residue protein sequence, read N- to C-terminus: Large ribosomal subunit protein uL1 (232 aa).

This sequence belongs to the universal ribosomal protein uL1 family. Part of the 50S ribosomal subunit.

In terms of biological role, binds directly to 23S rRNA. The L1 stalk is quite mobile in the ribosome, and is involved in E site tRNA release. Functionally, protein L1 is also a translational repressor protein, it controls the translation of the L11 operon by binding to its mRNA. This Burkholderia cenocepacia (strain ATCC BAA-245 / DSM 16553 / LMG 16656 / NCTC 13227 / J2315 / CF5610) (Burkholderia cepacia (strain J2315)) protein is Large ribosomal subunit protein uL1.